The following is a 420-amino-acid chain: Putative sporulation-specific glycosylase YdhD (420 aa).

LysM domains are found at residues 2 to 45 and 48 to 92; these read FIHI…ALLI and YVYT…KITI. The region spanning 100-420 is the GH18 domain; sequence AGTLSFYVLR…LRKFFTIRKV (321 aa). The Proton donor role is filled by E212.

It belongs to the glycosyl hydrolase 18 family. Chitinase class II subfamily.

It is found in the spore wall. The sequence is that of Putative sporulation-specific glycosylase YdhD (ydhD) from Bacillus subtilis (strain 168).